The chain runs to 233 residues: Large ribosomal subunit protein uL3 (233 aa).

Residues 146 to 171 (GSQRASHGNSRSHRVPGSIGQAQDPG) are disordered. Gln-168 bears the N5-methylglutamine mark.

It belongs to the universal ribosomal protein uL3 family. Part of the 50S ribosomal subunit. Forms a cluster with proteins L14 and L19. Post-translationally, methylated by PrmB.

One of the primary rRNA binding proteins, it binds directly near the 3'-end of the 23S rRNA, where it nucleates assembly of the 50S subunit. The sequence is that of Large ribosomal subunit protein uL3 from Bordetella bronchiseptica (strain ATCC BAA-588 / NCTC 13252 / RB50) (Alcaligenes bronchisepticus).